Consider the following 139-residue polypeptide: Protein archease (139 aa).

3 residues coordinate Ca(2+): D12, D138, and I139.

Belongs to the archease family.

In terms of biological role, activates the tRNA-splicing ligase complex by facilitating the enzymatic turnover of catalytic subunit RtcB. Acts by promoting the guanylylation of RtcB, a key intermediate step in tRNA ligation. Can also alter the NTP specificity of RtcB such that ATP, dGTP or ITP is used efficiently. This Sulfurisphaera tokodaii (strain DSM 16993 / JCM 10545 / NBRC 100140 / 7) (Sulfolobus tokodaii) protein is Protein archease.